Consider the following 281-residue polypeptide: Large ribosomal subunit protein uL2 (281 aa).

Residues 222–281 are disordered; that stretch reads TVRGSAMNPNDHPHGGGEGRQPIGRKSPMTPWGKRALGVKTRATKKASNQFIIRRRKETK.

This sequence belongs to the universal ribosomal protein uL2 family. Part of the 50S ribosomal subunit. Forms a bridge to the 30S subunit in the 70S ribosome.

Functionally, one of the primary rRNA binding proteins. Required for association of the 30S and 50S subunits to form the 70S ribosome, for tRNA binding and peptide bond formation. It has been suggested to have peptidyltransferase activity; this is somewhat controversial. Makes several contacts with the 16S rRNA in the 70S ribosome. This Metamycoplasma hominis (strain ATCC 23114 / DSM 25592 / NBRC 14850 / NCTC 10111 / PG21) (Mycoplasma hominis) protein is Large ribosomal subunit protein uL2.